Here is a 363-residue protein sequence, read N- to C-terminus: Spermidine/putrescine import ATP-binding protein PotA (363 aa).

Residues 4 to 234 (LEIRNVTRRF…PRNHFVADFI (231 aa)) enclose the ABC transporter domain. 36–43 (GPSGCGKT) lines the ATP pocket.

Belongs to the ABC transporter superfamily. Spermidine/putrescine importer (TC 3.A.1.11.1) family. The complex is composed of two ATP-binding proteins (PotA), two transmembrane proteins (PotB and PotC) and a solute-binding protein (PotD).

It localises to the cell inner membrane. It carries out the reaction ATP + H2O + polyamine-[polyamine-binding protein]Side 1 = ADP + phosphate + polyamineSide 2 + [polyamine-binding protein]Side 1.. In terms of biological role, part of the ABC transporter complex PotABCD involved in spermidine/putrescine import. Responsible for energy coupling to the transport system. The polypeptide is Spermidine/putrescine import ATP-binding protein PotA (Nitrosospira multiformis (strain ATCC 25196 / NCIMB 11849 / C 71)).